Reading from the N-terminus, the 195-residue chain is Myelin-associated neurite-outgrowth inhibitor (195 aa).

The Cytoplasmic segment spans residues 1 to 18 (MNPVYSPASSGVPYANPK). A helical membrane pass occupies residues 19-43 (GIGYPAGFPVGYAAAAPAYSPSMYP). The Extracellular segment spans residues 44–143 (GANPAFPSGY…APPIPPPRPN (100 aa)). The helical transmembrane segment at 144-163 (GVTMGMVGGTTMAMSAGTLL) threads the bilayer. The Cytoplasmic portion of the chain corresponds to 164 to 195 (TTHSPTPVAPHPSMPTYRQPATPTYSYVPPQW).

It belongs to the FAM168 family.

It is found in the cytoplasm. The protein resides in the perinuclear region. Its subcellular location is the cell membrane. The protein localises to the cell projection. It localises to the axon. In terms of biological role, inhibitor of neuronal axonal outgrowth. The polypeptide is Myelin-associated neurite-outgrowth inhibitor (fam168b) (Danio rerio (Zebrafish)).